The chain runs to 403 residues: Tryptophan synthase beta chain (403 aa).

Lys-96 bears the N6-(pyridoxal phosphate)lysine mark.

This sequence belongs to the TrpB family. As to quaternary structure, tetramer of two alpha and two beta chains. Pyridoxal 5'-phosphate serves as cofactor.

It carries out the reaction (1S,2R)-1-C-(indol-3-yl)glycerol 3-phosphate + L-serine = D-glyceraldehyde 3-phosphate + L-tryptophan + H2O. It functions in the pathway amino-acid biosynthesis; L-tryptophan biosynthesis; L-tryptophan from chorismate: step 5/5. Its function is as follows. The beta subunit is responsible for the synthesis of L-tryptophan from indole and L-serine. This Ralstonia nicotianae (strain ATCC BAA-1114 / GMI1000) (Ralstonia solanacearum) protein is Tryptophan synthase beta chain.